The chain runs to 179 residues: Large ribosomal subunit protein uL5 (179 aa).

This sequence belongs to the universal ribosomal protein uL5 family. As to quaternary structure, part of the 50S ribosomal subunit; part of the 5S rRNA/L5/L18/L25 subcomplex. Contacts the 5S rRNA and the P site tRNA. Forms a bridge to the 30S subunit in the 70S ribosome.

This is one of the proteins that bind and probably mediate the attachment of the 5S RNA into the large ribosomal subunit, where it forms part of the central protuberance. In the 70S ribosome it contacts protein S13 of the 30S subunit (bridge B1b), connecting the 2 subunits; this bridge is implicated in subunit movement. Contacts the P site tRNA; the 5S rRNA and some of its associated proteins might help stabilize positioning of ribosome-bound tRNAs. The sequence is that of Large ribosomal subunit protein uL5 from Macrococcus caseolyticus (strain JCSC5402) (Macrococcoides caseolyticum).